The chain runs to 147 residues: Hemoglobin subunit beta (147 aa).

Positions 3–147 (LLSAEENAHV…VANALAHKYH (145 aa)) constitute a Globin domain. Threonine 13 bears the Phosphothreonine mark. Serine 45 is modified (phosphoserine). The residue at position 60 (lysine 60) is an N6-acetyllysine. Position 64 (histidine 64) interacts with heme b. Lysine 83 carries the post-translational modification N6-acetyllysine. Residue histidine 93 participates in heme b binding. S-nitrosocysteine is present on cysteine 94. Position 145 is an N6-acetyllysine (lysine 145).

Belongs to the globin family. As to quaternary structure, heterotetramer of two alpha chains and two beta chains. Red blood cells.

In terms of biological role, involved in oxygen transport from the lung to the various peripheral tissues. This is Hemoglobin subunit beta (HBB) from Eulemur fulvus fulvus (Brown lemur).